Consider the following 513-residue polypeptide: ATP synthase subunit alpha (513 aa).

169-176 (GDRQIGKT) contacts ATP.

The protein belongs to the ATPase alpha/beta chains family. F-type ATPases have 2 components, CF(1) - the catalytic core - and CF(0) - the membrane proton channel. CF(1) has five subunits: alpha(3), beta(3), gamma(1), delta(1), epsilon(1). CF(0) has three main subunits: a(1), b(2) and c(9-12). The alpha and beta chains form an alternating ring which encloses part of the gamma chain. CF(1) is attached to CF(0) by a central stalk formed by the gamma and epsilon chains, while a peripheral stalk is formed by the delta and b chains.

It is found in the cell inner membrane. The catalysed reaction is ATP + H2O + 4 H(+)(in) = ADP + phosphate + 5 H(+)(out). Functionally, produces ATP from ADP in the presence of a proton gradient across the membrane. The alpha chain is a regulatory subunit. The sequence is that of ATP synthase subunit alpha from Francisella tularensis subsp. mediasiatica (strain FSC147).